We begin with the raw amino-acid sequence, 191 residues long: Cytochrome b-245 light chain (191 aa).

Topologically, residues 2 to 7 are cytoplasmic; that stretch reads GQIEWA. The chain crosses the membrane as a helical span at residues 8–30; the sequence is MWANEQALASGLILITGGIVATA. The Extracellular portion of the chain corresponds to 31-35; that stretch reads GQFTQ. A helical transmembrane segment spans residues 36-53; the sequence is WYLGAYSIAAGVLVCLLE. Residues 54–69 are Cytoplasmic-facing; sequence YPRGKRSKGSTMERCG. An intramembrane segment occupies 70–80; the sequence is QKYLTRVVKLF. Residues 81 to 86 lie on the Cytoplasmic side of the membrane; it reads GPLTRN. The helical transmembrane segment at 87 to 104 threads the bilayer; it reads YYIRAFLHLGLAVPAGFL. A topological domain (extracellular) is located at residue Leu105. The chain crosses the membrane as a helical span at residues 106–126; sequence ATILGTACLAIASGIYLLAAI. Residues 127–191 are Cytoplasmic-facing; that stretch reads RGEQWSPIEP…NPMPVNDEVV (65 aa). Residues 134-191 are disordered; the sequence is IEPKPKERPQIGGTIKQPPSNPPPRPPAEARKKLSEEAAGVPTGGPQENPMPVNDEVV. The residue at position 147 (Thr147) is a Phosphothreonine. A Glycyl lysine isopeptide (Lys-Gly) (interchain with G-Cter in ubiquitin) cross-link involves residue Lys149. Ser168 is modified (phosphoserine).

This sequence belongs to the p22phox family. Component of the phagocyte NADPH oxidase core complex/cytochrome b558 complex, composed of CYBB (heavy chain (beta)) and CYBA (light chain (alpha)). Component of the phagocyte NADPH oxidase complex composed of an obligatory core heterodimer formed by the membrane proteins CYBA and CYBB and the cytosolic regulatory subunits NCF1/p47-phox, NCF2/p67-phox, NCF4/p40-phox and the small GTPase RAC1 or RAC2. Interacts with NCF1 (via SH3 domain). Interacts with SH3PXD2A. Interacts with DUOX1, DUOX2 and TPO. Interacts with NOX4; this interaction mediates superoxide generation. Interacts with calprotectin (S100A8/9). Interacts with GBP7. Interacts with NOXO1. Forms a heterodimer with NOX3 and is essential for activity and cell membrane localization of NOX3. Interacts with NOX1. Post-translationally, phosphorylation at Thr-147 enhances NADPH oxidase activity by promoting NCF1/p47-phox binding. Ubiquitinated at Lys-149 likely by RNF145.

The protein resides in the cell membrane. Subunit of NADPH oxidase complexes that is required for the NADPH oxidase activity that generates, in various cell types, superoxide from molecular oxygen utilizing NADPH as an electron donor. Subunit of the phagocyte NADPH oxidase complex that mediates the transfer of electrons from cytosolic NADPH to O2 to produce the superoxide anion (O2(-)). In the activated complex, electrons are first transferred from NADPH to flavin adenine dinucleotide (FAD) and subsequently transferred via two heme molecules to molecular oxygen, producing superoxide through an outer-sphere reaction. Activation of the NADPH oxidase complex is initiated by the assembly of cytosolic subunits of the NADPH oxidase complex with the core NADPH oxidase complex to form a complex at the plasma membrane or phagosomal membrane. This activation process is initiated by phosphorylation dependent binding of the cytosolic NCF1/p47-phox subunit to the C-terminus of CYBA/p22-phox. Aassociates with NOX3 to form a functional NADPH oxidase constitutively generating superoxide. The chain is Cytochrome b-245 light chain from Bison bison (American bison).